Consider the following 154-residue polypeptide: Myoglobin (154 aa).

Residues 2-148 enclose the Globin domain; the sequence is GLSDGEWQLV…FRNDIAAKYK (147 aa). Serine 4 is modified (phosphoserine). Position 65 (histidine 65) interacts with nitrite. Histidine 65 contacts O2. The residue at position 68 (threonine 68) is a Phosphothreonine. Histidine 94 is a heme b binding site.

The protein belongs to the globin family. Monomeric.

It is found in the cytoplasm. It localises to the sarcoplasm. It carries out the reaction Fe(III)-heme b-[protein] + nitric oxide + H2O = Fe(II)-heme b-[protein] + nitrite + 2 H(+). It catalyses the reaction H2O2 + AH2 = A + 2 H2O. In terms of biological role, monomeric heme protein which primary function is to store oxygen and facilitate its diffusion within muscle tissues. Reversibly binds oxygen through a pentacoordinated heme iron and enables its timely and efficient release as needed during periods of heightened demand. Depending on the oxidative conditions of tissues and cells, and in addition to its ability to bind oxygen, it also has a nitrite reductase activity whereby it regulates the production of bioactive nitric oxide. Under stress conditions, like hypoxia and anoxia, it also protects cells against reactive oxygen species thanks to its pseudoperoxidase activity. This is Myoglobin (MB) from Spalax ehrenbergi (Middle East blind mole rat).